Here is a 929-residue protein sequence, read N- to C-terminus: MKLKETLNLGKTAFPMRAGLPNKEPIWQKEWEEAKVYQRRQELNQGKPHFTLHDGPPYANGNIHVGHAMNKISKDIIVRSKSMSGFYAPFIPGWDTHGLPIEQVLAKQGVKRKELDRAEYLKMCRDYALSQVDKQREDFKRLGVSADWENPYVTLTPDYEAAQIRVFGEMAKKGYIYQGAKPVYWSWSSESALAEAEIEYHDLVSTSLYYANKVKDGKGVLDTDTYIVVWTTTPFTVTASRGLAVGADIEYVLVKPAGETRKFIVASELLNSLSEKFAWEEVEVLNTYRGDELNQIVTEHPWDSEVDELVILGEHVTTDSGTGIVHTAPGFGEDDYNVGVANGLEVVVTVNERGIMMENAGPDFAGKFYDKVAPIVMEKLGDLLLAKEEISHSYPFDWRTKKPIIWRAVPQWFASVSKFRQEILDEIEKVKFHSEWGKVRLYNMIRDRGDWVISRQRAWGVPLPIFYAEDRTPIMTEETIEHVAKLFEEHGSVIWWERDAKDLLPEGFTHPGSPNGEFTKENDIMDVWFDSGSSWNGVVVNRPELTYPADLYLEGSDQYRGWFNSSLITSVANHGVAPYKQLLSQGFALDGKGEKMSKSLGNTIAPSDVEKQFGAEILRLWVTSVDTSNDVRISMDILSQVSESYRKIRNTLRFLIANTSDFNPTTDAVAFEDLRSVDQYMTIRFNQLVKNIRDAYENFEFLTIYKSLVNFINVELSAFYLDFAKDVVYIESAKSLERRQMQTVFYDILVKITKLLTPILPHTAEEIWSYLEFENEDYVQLSELPEAEDFANQDALLEKWNAFMDFRGKAQKALEEARNEKVIGKSLEAHLTIYPDAEVKELLESLNTNLAQLLIVSALTIAEGDVPESAVRFQGVSFTVERAEGEVCDRCRRIDPTTKERSYNATICNHCASIIEENFAEVVAEGFEV.

The 'HIGH' region signature appears at 57–67 (PYANGNIHVGH). Glutamate 554 contacts L-isoleucyl-5'-AMP. The short motif at 595–599 (KMSKS) is the 'KMSKS' region element. Residue lysine 598 participates in ATP binding. Positions 888, 891, 908, and 911 each coordinate Zn(2+).

The protein belongs to the class-I aminoacyl-tRNA synthetase family. IleS type 1 subfamily. In terms of assembly, monomer. Zn(2+) is required as a cofactor.

It localises to the cytoplasm. The enzyme catalyses tRNA(Ile) + L-isoleucine + ATP = L-isoleucyl-tRNA(Ile) + AMP + diphosphate. Its function is as follows. Catalyzes the attachment of isoleucine to tRNA(Ile). As IleRS can inadvertently accommodate and process structurally similar amino acids such as valine, to avoid such errors it has two additional distinct tRNA(Ile)-dependent editing activities. One activity is designated as 'pretransfer' editing and involves the hydrolysis of activated Val-AMP. The other activity is designated 'posttransfer' editing and involves deacylation of mischarged Val-tRNA(Ile). This Streptococcus thermophilus (strain ATCC BAA-491 / LMD-9) protein is Isoleucine--tRNA ligase.